The following is a 746-amino-acid chain: Lysine-specific histone demethylase 1 homolog 2 (746 aa).

A disordered region spans residues 1-26; it reads MNSPASDETAPRRNRRKVSRKNYDEN. Positions 51-152 constitute an SWIRM domain; that stretch reads EKETETEALI…FGVSPLFAPY (102 aa). E189, R191, R197, and E569 together coordinate FAD.

Belongs to the flavin monoamine oxidase family. The cofactor is FAD. Expressed in the shoot and root apical regions of young seedlings. Expressed in inflorescences.

In terms of biological role, probable histone demethylase that reduces the levels of histone H3 'Lys-4' methylation in chromatin of the floral repressor FLOWERING LOCUS C (FLC) and the sporophytically silenced floral repressor FWA. Seems to act in partial redundancy with FLOWERING LOCUS D (FLD) to repress FLC expression. Required for cytosine methylation of FWA. Controls primary seed dormancy by regulating DOG1 and abscisic acid signaling-related genes. The sequence is that of Lysine-specific histone demethylase 1 homolog 2 from Arabidopsis thaliana (Mouse-ear cress).